Reading from the N-terminus, the 202-residue chain is Protein-methionine-sulfoxide reductase heme-binding subunit MsrQ (202 aa).

6 helical membrane passes run L8–F28, L42–L62, L75–L95, P110–N130, L147–L167, and E169–A189.

This sequence belongs to the MsrQ family. As to quaternary structure, heterodimer of a catalytic subunit (MsrP) and a heme-binding subunit (MsrQ). It depends on FMN as a cofactor. The cofactor is heme b.

It localises to the cell inner membrane. Part of the MsrPQ system that repairs oxidized periplasmic proteins containing methionine sulfoxide residues (Met-O), using respiratory chain electrons. Thus protects these proteins from oxidative-stress damage caused by reactive species of oxygen and chlorine generated by the host defense mechanisms. MsrPQ is essential for the maintenance of envelope integrity under bleach stress, rescuing a wide series of structurally unrelated periplasmic proteins from methionine oxidation. MsrQ provides electrons for reduction to the reductase catalytic subunit MsrP, using the quinone pool of the respiratory chain. This chain is Protein-methionine-sulfoxide reductase heme-binding subunit MsrQ, found in Pseudomonas paraeruginosa (strain DSM 24068 / PA7) (Pseudomonas aeruginosa (strain PA7)).